The chain runs to 456 residues: tRNA modification GTPase MnmE (456 aa).

The (6S)-5-formyl-5,6,7,8-tetrahydrofolate site is built by arginine 23, glutamate 85, and arginine 124. A TrmE-type G domain is found at 220-375 (GLRVLIFGKP…LVSAIQERFV (156 aa)). Asparagine 230 contributes to the K(+) binding site. GTP is bound by residues 230–235 (NVGKSS), 249–255 (TDIPGTT), and 274–277 (DTAG). Residue serine 234 coordinates Mg(2+). K(+) contacts are provided by threonine 249, isoleucine 251, and threonine 254. Residue threonine 255 coordinates Mg(2+). Lysine 456 provides a ligand contact to (6S)-5-formyl-5,6,7,8-tetrahydrofolate.

The protein belongs to the TRAFAC class TrmE-Era-EngA-EngB-Septin-like GTPase superfamily. TrmE GTPase family. As to quaternary structure, homodimer. Heterotetramer of two MnmE and two MnmG subunits. The cofactor is K(+).

The protein resides in the cytoplasm. Its function is as follows. Exhibits a very high intrinsic GTPase hydrolysis rate. Involved in the addition of a carboxymethylaminomethyl (cmnm) group at the wobble position (U34) of certain tRNAs, forming tRNA-cmnm(5)s(2)U34. The sequence is that of tRNA modification GTPase MnmE from Syntrophotalea carbinolica (strain DSM 2380 / NBRC 103641 / GraBd1) (Pelobacter carbinolicus).